Reading from the N-terminus, the 559-residue chain is Dihydroxy-acid dehydratase (559 aa).

Asp78 is a Mg(2+) binding site. Cys119 is a binding site for [2Fe-2S] cluster. Asp120 and Lys121 together coordinate Mg(2+). Residue Lys121 is modified to N6-carboxylysine. Residue Cys192 participates in [2Fe-2S] cluster binding. Glu446 lines the Mg(2+) pocket. The Proton acceptor role is filled by Ser472.

This sequence belongs to the IlvD/Edd family. As to quaternary structure, homodimer. [2Fe-2S] cluster serves as cofactor. The cofactor is Mg(2+).

It carries out the reaction (2R)-2,3-dihydroxy-3-methylbutanoate = 3-methyl-2-oxobutanoate + H2O. The enzyme catalyses (2R,3R)-2,3-dihydroxy-3-methylpentanoate = (S)-3-methyl-2-oxopentanoate + H2O. It participates in amino-acid biosynthesis; L-isoleucine biosynthesis; L-isoleucine from 2-oxobutanoate: step 3/4. It functions in the pathway amino-acid biosynthesis; L-valine biosynthesis; L-valine from pyruvate: step 3/4. Functions in the biosynthesis of branched-chain amino acids. Catalyzes the dehydration of (2R,3R)-2,3-dihydroxy-3-methylpentanoate (2,3-dihydroxy-3-methylvalerate) into 2-oxo-3-methylpentanoate (2-oxo-3-methylvalerate) and of (2R)-2,3-dihydroxy-3-methylbutanoate (2,3-dihydroxyisovalerate) into 2-oxo-3-methylbutanoate (2-oxoisovalerate), the penultimate precursor to L-isoleucine and L-valine, respectively. The chain is Dihydroxy-acid dehydratase from Wolinella succinogenes (strain ATCC 29543 / DSM 1740 / CCUG 13145 / JCM 31913 / LMG 7466 / NCTC 11488 / FDC 602W) (Vibrio succinogenes).